A 396-amino-acid chain; its full sequence is Probable sugar efflux transporter (396 aa).

12 helical membrane passes run 15–35 (VVTLAVAAFIFNTTEFVPVGL), 50–70 (VGIMLTIYAWVVALMSLPFML), 81–101 (LICLFVVFIASHVLSFLSWSF), 103–123 (VLVISRIGVAFAHAIFWSITA), 136–156 (AQALSLIATGTALAMVLGLPL), 170–190 (FFAIGIGALITLLCLIKLLPL), 209–229 (PALMSIYLLTVVVVTAHYTAY), 246–266 (FATALLLLLGGAGIIGSVIFG), 275–295 (ALVSTAIALLLVCLALLLPAA), 299–319 (IHLGVLSIFWGIAMMLIGLGM), 333–353 (VAMALFSGIFNIGIGAGALVG), and 364–384 (MIGYVGAVPAFAALIWSIIIF).

It belongs to the major facilitator superfamily. SotB (TC 2.A.1.2) family.

Its subcellular location is the cell inner membrane. Functionally, involved in the efflux of sugars. The physiological role may be the reduction of the intracellular concentration of toxic sugars or sugar metabolites. The polypeptide is Probable sugar efflux transporter (Shigella boydii serotype 18 (strain CDC 3083-94 / BS512)).